Consider the following 185-residue polypeptide: Elongation factor P (185 aa).

It belongs to the elongation factor P family.

The protein localises to the cytoplasm. Its pathway is protein biosynthesis; polypeptide chain elongation. Involved in peptide bond synthesis. Stimulates efficient translation and peptide-bond synthesis on native or reconstituted 70S ribosomes in vitro. Probably functions indirectly by altering the affinity of the ribosome for aminoacyl-tRNA, thus increasing their reactivity as acceptors for peptidyl transferase. The polypeptide is Elongation factor P (Dechloromonas aromatica (strain RCB)).